We begin with the raw amino-acid sequence, 309 residues long: UDP-N-acetylenolpyruvoylglucosamine reductase (309 aa).

One can recognise an FAD-binding PCMH-type domain in the interval 34–198 (RVGGPAEVMF…VRARLHARPG (165 aa)). Arg-178 is an active-site residue. Ser-227 acts as the Proton donor in catalysis. Glu-297 is a catalytic residue.

This sequence belongs to the MurB family. The cofactor is FAD.

The protein localises to the cytoplasm. It carries out the reaction UDP-N-acetyl-alpha-D-muramate + NADP(+) = UDP-N-acetyl-3-O-(1-carboxyvinyl)-alpha-D-glucosamine + NADPH + H(+). The protein operates within cell wall biogenesis; peptidoglycan biosynthesis. Its function is as follows. Cell wall formation. The polypeptide is UDP-N-acetylenolpyruvoylglucosamine reductase (Acidiphilium cryptum (strain JF-5)).